The following is a 547-amino-acid chain: Heme-binding protein A (547 aa).

A signal peptide spans 1-18 (MKLKATLTLAAATLVLAA). Cys-19 carries the N-palmitoyl cysteine lipid modification. A lipid anchor (S-diacylglycerol cysteine) is attached at Cys-19.

Belongs to the bacterial solute-binding protein 5 family.

The protein resides in the cell inner membrane. Important role in heme acquisition or metabolism. This chain is Heme-binding protein A (hbpA), found in Haemophilus influenzae (strain ATCC 51907 / DSM 11121 / KW20 / Rd).